Reading from the N-terminus, the 148-residue chain is Large ribosomal subunit protein bL9 (148 aa).

Belongs to the bacterial ribosomal protein bL9 family.

Functionally, binds to the 23S rRNA. The protein is Large ribosomal subunit protein bL9 of Listeria innocua serovar 6a (strain ATCC BAA-680 / CLIP 11262).